A 742-amino-acid chain; its full sequence is UPF0313 protein MA_4618 (742 aa).

The disordered stretch occupies residues 1 to 125 (MGVRKQTMVK…SFSSSLPASK (125 aa)). The tract at residues 1–128 (MGVRKQTMVK…SSLPASKFLP (128 aa)) is unknown. Basic and acidic residues-rich tracts occupy residues 17-40 (ENKK…ERAG) and 49-73 (KKVE…KAEG). Residues 106-115 (TGKKEKKQKK) are compositionally biased toward basic residues. The tract at residues 129-742 (MSPEEVKARG…KCLIRRKEKQ (614 aa)) is UPF0313. A Radical SAM core domain is found at 438-707 (ALEMVKFSLT…AMQRALMHYR (270 aa)). Cysteine 452, cysteine 456, and cysteine 459 together coordinate [4Fe-4S] cluster.

It in the C-terminal section; belongs to the UPF0313 family. The cofactor is [4Fe-4S] cluster.

This chain is UPF0313 protein MA_4618, found in Methanosarcina acetivorans (strain ATCC 35395 / DSM 2834 / JCM 12185 / C2A).